Here is a 360-residue protein sequence, read N- to C-terminus: Peptide chain release factor 1 (360 aa).

Q237 carries the N5-methylglutamine modification.

The protein belongs to the prokaryotic/mitochondrial release factor family. Methylated by PrmC. Methylation increases the termination efficiency of RF1.

The protein localises to the cytoplasm. Peptide chain release factor 1 directs the termination of translation in response to the peptide chain termination codons UAG and UAA. In Azotobacter vinelandii (strain DJ / ATCC BAA-1303), this protein is Peptide chain release factor 1.